Reading from the N-terminus, the 1460-residue chain is MSHHQAVSQLHLFVSILDALFSDPDCLLSSFMNVTEDELDELWSWNSPLQPELRFCMHEKVSEQAALHPEKIAIDAWDGTLTYRQVEDYSTDLAQTLQLLDGSHNQIIPVLFEKSRWTSVAVLAIMKAGACFALLDPAQPEGRLRAVVQQVSARLFVSSKAQATLAARVAPAATIIPVSASKFDKVYSPCAAQQPKTTLPPVSPDQPLYIQFTSGSTGLPKGCILTHSQYTSGAIPRADAVGYRSHSRVLDFASYAFDVCIDSMLCTLAHGATLCTPSDERRMNDMSGAMRDMRVTFAGMTPSVARTLDVDILDHLDSIALGGEGVSTSDAMSWGQRTRVVNAYGPSEATVGATINDNVASKPYITMGKRKGCAIWLTDPEDSNKLVPPGAVGELLIEGPIVATDISITRRKPRKFSLKIPNSWLKGSKSFPGRHGRIYKTGDLVRFDPDGNGEPIFVGRQDQQVKLRGQRIKLAEIEFNMQKHLPADTQLAVEVIKPSGGGEQTLVAFLVEQKKNGMRHLDGNVFGSFTTKFQSALKDMTKQLAVDLPGYMVPSAYIPLWKMPLLVSCKTDRKRLREIGTSVTRQDLRRFNSVISEKKEPTTEMEIKLRSLWGKLLGGEDDFSANDNFFSMGGDSLRAMRLVAAAREAGLVLNVPDIMLNPTLSAMATKIKPLSEEATNDVPAFSLIEKDWDMNSAKAETAKLCGVDVNEVQDVYPCTPLQEGLMALSAKFQDAYVAQRIATLPSETAQRLKEAFDTAAEGSPILRTRIVNVSGRGLFQVVLKNGRLLREHGADPAEYLRRDREEAMDLGTALFRYGLVQEAGSDETHFVITMHHAVYDGWSMPLIFDRINRAFNGLQTERSVSFKHFIKHLTSLDPAEAQDYWRERLAGVNPYQFPPLPQKGYTTQADSLLEHYVSVPTTAHNKLTLATIIRGAWALVSSLYMGHPDVVFGETLTGRSAPVNGIEEIEGPMITTVPIRVRLSLDRPISDYLQAVHAQTVKQIPHEHLGLQNIRRLSKDARVACDLRTGLVLHPREDDVGEVDMEAVPANTFLPADDAEAAREALKFNTYALMLVCTLDENGFLIMASFDSKCISKDAMERVLVVMNRIVTAFLGNPESKLGDVAVLDPSEAQDAEAMRPRDVMSDSGIGTSPIDSPKLDAAMKALSPNEEKLHSILGRILGMPETEIKSSDSFFELGGDSIGAMRLVSDARAQGLTLTVAQVFQSQSLAELAASIGNEKEDKLLDILSRILGMPKSEINGSDSFFELGGDSIGAMRLVSDARAQGLNLTVAQVFQSQSLSELASSAEETDSPQTETNSNAPYAALGKEASLYSPDRIGAYLQDQSWEIVDVYPTRPLQQLAVEGTVDLPRYSLRYELIKFATPINRQKLEQACQELVARNEVLRTVFVKDESKVLGVVLSSPRVPYSEIAVPDGEDINAFSQANIQKDIEAPKPHGSS.

The interval 63-468 is adenylation; that stretch reads EQAALHPEKI…GRQDQQVKLR (406 aa). The 76-residue stretch at 600-675 folds into the Carrier 1 domain; the sequence is EPTTEMEIKL…AMATKIKPLS (76 aa). At S636 the chain carries O-(pantetheine 4'-phosphoryl)serine. The segment at 712–1135 is condensation; the sequence is VQDVYPCTPL…AVLDPSEAQD (424 aa). Carrier domains lie at 1168 to 1241 and 1236 to 1312; these read SPNE…GNEK and SIGN…EETD. O-(pantetheine 4'-phosphoryl)serine occurs at positions 1202 and 1273. Residues 1303-1324 are disordered; sequence ELASSAEETDSPQTETNSNAPY. Over residues 1313–1322 the composition is skewed to polar residues; sequence SPQTETNSNA.

It belongs to the NRP synthetase family.

The protein operates within siderophore biosynthesis. NRPS involved in extracellular coprogen-type siderophores biosynthesis. The role of extracellular siderophores in fungal virulence to plants is to supply iron to the fungus during plant infection, but not to act as phytotoxins, depriving their hosts of iron. This is Nonribosomal peptide synthetase 6 from Alternaria brassicicola (Dark leaf spot agent).